The chain runs to 137 residues: Putative pumilio homolog 25 (137 aa).

Pumilio repeat units lie at residues 70-105 and 108-137; these read EFDSYFENLVKDRVGNYVVQRLIWGFKRTGIDLPHS and SVLVTRSIHLCKHRYGYQVIEAFDRSTRLA.

It is found in the cytoplasm. Functionally, sequence-specific RNA-binding protein that regulates translation and mRNA stability by binding the 3'-UTR of target mRNAs. The chain is Putative pumilio homolog 25 (APUM25) from Arabidopsis thaliana (Mouse-ear cress).